The chain runs to 371 residues: Cytochrome b (371 aa).

A run of 4 helical transmembrane segments spans residues 25-45, 69-90, 105-125, and 170-190; these read FGSM…FLAV, WMMQ…YIHI, WMSG…GYVL, and FFAL…LHII. Heme b is bound by residues His-75 and His-89. Residues His-174 and His-188 each contribute to the heme b site. A ubiquinone is bound at residue His-193. Helical transmembrane passes span 218-238, 280-300, 312-332, and 339-358; these read HKDL…VSFS, LGGA…PFTH, LSQL…WAAT, and FIII…LSIP.

The protein belongs to the cytochrome b family. In terms of assembly, the cytochrome bc1 complex contains 3 respiratory subunits (MT-CYB, CYC1 and UQCRFS1), 2 core proteins (UQCRC1 and UQCRC2) and probably 6 low-molecular weight proteins. The cofactor is heme b.

It localises to the mitochondrion inner membrane. Functionally, component of the ubiquinol-cytochrome c reductase complex (complex III or cytochrome b-c1 complex) that is part of the mitochondrial respiratory chain. The b-c1 complex mediates electron transfer from ubiquinol to cytochrome c. Contributes to the generation of a proton gradient across the mitochondrial membrane that is then used for ATP synthesis. In Antaresia childreni (Children's python), this protein is Cytochrome b (MT-CYB).